Consider the following 447-residue polypeptide: Argininosuccinate synthase (447 aa).

Residues 17-25 (AFSGGLDTS) and A43 each bind ATP. Residue Y99 coordinates L-citrulline. 2 residues coordinate ATP: G129 and T131. L-aspartate is bound by residues T131, N135, and D136. N135 lines the L-citrulline pocket. D136 provides a ligand contact to ATP. L-citrulline contacts are provided by R139 and S192. D194 serves as a coordination point for ATP. Positions 201, 203, and 280 each coordinate L-citrulline.

Belongs to the argininosuccinate synthase family. Type 2 subfamily. As to quaternary structure, homotetramer.

It localises to the cytoplasm. It carries out the reaction L-citrulline + L-aspartate + ATP = 2-(N(omega)-L-arginino)succinate + AMP + diphosphate + H(+). The protein operates within amino-acid biosynthesis; L-arginine biosynthesis; L-arginine from L-ornithine and carbamoyl phosphate: step 2/3. This Salmonella newport (strain SL254) protein is Argininosuccinate synthase.